Reading from the N-terminus, the 209-residue chain is Uracil phosphoribosyltransferase (209 aa).

Residues Arg-79, Arg-104, and 131–139 contribute to the 5-phospho-alpha-D-ribose 1-diphosphate site; that span reads DPMLATGNS. Uracil is bound by residues Ile-194 and 199-201; that span reads GDA. Asp-200 is a 5-phospho-alpha-D-ribose 1-diphosphate binding site.

Belongs to the UPRTase family. It depends on Mg(2+) as a cofactor.

The catalysed reaction is UMP + diphosphate = 5-phospho-alpha-D-ribose 1-diphosphate + uracil. It functions in the pathway pyrimidine metabolism; UMP biosynthesis via salvage pathway; UMP from uracil: step 1/1. With respect to regulation, allosterically activated by GTP. In terms of biological role, catalyzes the conversion of uracil and 5-phospho-alpha-D-ribose 1-diphosphate (PRPP) to UMP and diphosphate. The protein is Uracil phosphoribosyltransferase of Rhodococcus jostii (strain RHA1).